The primary structure comprises 62 residues: Small EDRK-rich factor 1 (62 aa).

2 stretches are compositionally biased toward basic and acidic residues: residues 1-30 (MARG…KEDS) and 50-62 (AANE…TREK). The interval 1-62 (MARGNQRELA…ERKSMQTREK (62 aa)) is disordered.

It belongs to the SERF family. In terms of assembly, interacts with SNCA; this interaction promotes the aggregation of SNCA.

It is found in the cytoplasm. The protein resides in the cytosol. Its subcellular location is the nucleus. Functionally, positive regulator of amyloid protein aggregation and proteotoxicity. Induces conformational changes in amyloid proteins, such as APP, HTT, and SNCA, driving them into compact formations preceding the formation of aggregates. The protein is Small EDRK-rich factor 1 (SERF1) of Bos taurus (Bovine).